The following is a 70-amino-acid chain: Protein SlyX homolog (70 aa).

Belongs to the SlyX family.

The polypeptide is Protein SlyX homolog (Shewanella putrefaciens (strain CN-32 / ATCC BAA-453)).